A 322-amino-acid chain; its full sequence is Nodulation protein Z (322 aa).

The GT23 domain occupies 1-314 (MYNRYVLSRR…NDPSRLVVIE (314 aa)).

This sequence belongs to the glycosyltransferase 23 family.

Functionally, fucosyltransferase which adds the fucose moiety of the nod factor on its terminal reducing N-acetylglucosamine end. Uses GDP-fucose as the donor group. This Sinorhizobium fredii (strain NBRC 101917 / NGR234) protein is Nodulation protein Z (nodZ).